Here is a 123-residue protein sequence, read N- to C-terminus: Large ribosomal subunit protein bL12 (123 aa).

The protein belongs to the bacterial ribosomal protein bL12 family. In terms of assembly, homodimer. Part of the ribosomal stalk of the 50S ribosomal subunit. Forms a multimeric L10(L12)X complex, where L10 forms an elongated spine to which 2 to 4 L12 dimers bind in a sequential fashion. Binds GTP-bound translation factors.

Functionally, forms part of the ribosomal stalk which helps the ribosome interact with GTP-bound translation factors. Is thus essential for accurate translation. This is Large ribosomal subunit protein bL12 from Bartonella quintana (strain Toulouse) (Rochalimaea quintana).